A 172-amino-acid polypeptide reads, in one-letter code: Putative phosphoesterase BAMEG_3349 (172 aa).

H34 functions as the Proton donor in the catalytic mechanism. Short sequence motifs (HXTX) lie at residues 34–37 and 115–118; these read HITL and HLTI. Catalysis depends on H115, which acts as the Proton acceptor.

This sequence belongs to the 2H phosphoesterase superfamily. YjcG family.

In Bacillus anthracis (strain CDC 684 / NRRL 3495), this protein is Putative phosphoesterase BAMEG_3349.